The chain runs to 200 residues: Small ribosomal subunit protein uS4 (200 aa).

Positions 22 to 43 are disordered; sequence TGKELERRPYAPGQHGPTQRKK. An S4 RNA-binding domain is found at 92–170; it reads QRLDNIVYRL…VPEYVTFDAE (79 aa).

The protein belongs to the universal ribosomal protein uS4 family. Part of the 30S ribosomal subunit. Contacts protein S5. The interaction surface between S4 and S5 is involved in control of translational fidelity.

In terms of biological role, one of the primary rRNA binding proteins, it binds directly to 16S rRNA where it nucleates assembly of the body of the 30S subunit. Functionally, with S5 and S12 plays an important role in translational accuracy. The polypeptide is Small ribosomal subunit protein uS4 (Listeria monocytogenes serotype 4a (strain HCC23)).